The chain runs to 431 residues: Peptidase B (431 aa).

The Mn(2+) site is built by K196 and D201. Residue K208 is part of the active site. The Mn(2+) site is built by D219, D278, and E280. Residue R282 is part of the active site.

The protein belongs to the peptidase M17 family. Homohexamer. Requires Mn(2+) as cofactor.

The protein localises to the cytoplasm. The catalysed reaction is Release of an N-terminal amino acid, Xaa, from a peptide or arylamide. Xaa is preferably Glu or Asp but may be other amino acids, including Leu, Met, His, Cys and Gln.. Probably plays an important role in intracellular peptide degradation. This is Peptidase B from Vibrio atlanticus (strain LGP32) (Vibrio splendidus (strain Mel32)).